The following is a 246-amino-acid chain: uncharacterized protein (246 aa).

Basic residues-rich tracts occupy residues 1-10 and 79-97; these read MVWRFQKHIG and TRRR…KAGR. The segment at 1–184 is disordered; it reads MVWRFQKHIG…LPPAHVPPTL (184 aa). Residues 158–180 are compositionally biased toward pro residues; it reads PPFPPPPPPGDPTPPSPLPPAHV.

This is an uncharacterized protein from Homo sapiens (Human).